A 122-amino-acid chain; its full sequence is uncharacterized protein (122 aa).

This is an uncharacterized protein from Carica papaya (Papaya).